A 157-amino-acid chain; its full sequence is N-acetylgalactosamine-specific phosphotransferase enzyme IIB component 2 (157 aa).

The PTS EIIB type-4 domain maps to 1–157 (MPNIVLSRID…EPAVDLFKLL (157 aa)). The active-site Pros-phosphohistidine intermediate is the H15.

It localises to the cytoplasm. The phosphoenolpyruvate-dependent sugar phosphotransferase system (sugar PTS), a major carbohydrate active -transport system, catalyzes the phosphorylation of incoming sugar substrates concomitantly with their translocation across the cell membrane. This system is involved in N-acetylgalactosamine transport. The sequence is that of N-acetylgalactosamine-specific phosphotransferase enzyme IIB component 2 (agaV) from Escherichia coli (strain K12).